The following is a 122-amino-acid chain: Large ribosomal subunit protein uL14 (122 aa).

Belongs to the universal ribosomal protein uL14 family. As to quaternary structure, part of the 50S ribosomal subunit. Forms a cluster with proteins L3 and L19. In the 70S ribosome, L14 and L19 interact and together make contacts with the 16S rRNA in bridges B5 and B8.

In terms of biological role, binds to 23S rRNA. Forms part of two intersubunit bridges in the 70S ribosome. The polypeptide is Large ribosomal subunit protein uL14 (Brachyspira hyodysenteriae (strain ATCC 49526 / WA1)).